The following is a 437-amino-acid chain: Branched-chain amino acid transport system 3 carrier protein (437 aa).

12 consecutive transmembrane segments (helical) span residues 9–29 (ILAL…IIFP), 40–60 (VWLA…ITVI), 79–99 (YAGG…FAIP), 120–140 (ALFV…LYPG), 155–175 (ILAL…PIGT), 189–209 (FVNG…IVIV), 226–246 (YAIV…VSLF), 277–297 (LGSS…AVGL), 316–336 (LVII…TKLI), 342–362 (VLTA…CIGL), 369–389 (ILAP…LKAA), and 399–419 (LLHL…VATL).

The protein belongs to the branched chain amino acid transporter family.

The protein resides in the cell inner membrane. Functionally, component of the LIV-III transport system for branched-chain amino acids. BraZ is specific for isoleucine and valine. The LIV-III transport system may be H(+)-coupled. The chain is Branched-chain amino acid transport system 3 carrier protein (braZ) from Pseudomonas aeruginosa (strain ATCC 15692 / DSM 22644 / CIP 104116 / JCM 14847 / LMG 12228 / 1C / PRS 101 / PAO1).